We begin with the raw amino-acid sequence, 102 residues long: Large ribosomal subunit protein uL23 (102 aa).

This sequence belongs to the universal ribosomal protein uL23 family. Part of the 50S ribosomal subunit. Contacts protein L29, and trigger factor when it is bound to the ribosome.

Its function is as follows. One of the early assembly proteins it binds 23S rRNA. One of the proteins that surrounds the polypeptide exit tunnel on the outside of the ribosome. Forms the main docking site for trigger factor binding to the ribosome. This Cutibacterium acnes (strain DSM 16379 / KPA171202) (Propionibacterium acnes) protein is Large ribosomal subunit protein uL23.